Here is a 240-residue protein sequence, read N- to C-terminus: Spore coat polysaccharide biosynthesis protein SpsF (240 aa).

It belongs to the CMP-NeuNAc synthase family.

Its pathway is spore coat biogenesis; spore coat polysaccharide biosynthesis. The protein is Spore coat polysaccharide biosynthesis protein SpsF (spsF) of Bacillus subtilis (strain 168).